A 693-amino-acid polypeptide reads, in one-letter code: Tegument protein UL47 (693 aa).

Disordered stretches follow at residues 1–32 (MSAREPAGRRRRASTRPRASPVADEPAGDGVG) and 48–126 (ELEA…GYLG). The span at 48–57 (ELEALEEMAG) shows a compositional bias: acidic residues. The segment at 50-75 (EALEEMAGDEPPVRRRREGPRARRRR) is RNA-binding. Positions 63 to 75 (RRRREGPRARRRR) match the Nuclear localization signal motif. The span at 63–75 (RRRREGPRARRRR) shows a compositional bias: basic residues. The Nuclear export signal signature appears at 647–670 (SVLGPRVRVVDIMSQFRKLLMGDE).

This sequence belongs to the alphaherpesvirinae HHV-1 UL47 family. In terms of assembly, interacts with US3 kinase. Interacts with UL31 and UL34; these interactions seem important for efficient virion nuclear egress. Interacts with UL41/VHS. In terms of processing, phosphorylated by US3. This phosphorylation is required for proper nuclear localization.

It localises to the virion tegument. The protein localises to the host nucleus. It is found in the host cytoplasm. Tegument protein that can bind to various RNA transcripts. Plays a role in the attenuation of selective viral and cellular mRNA degradation by modulating the activity of host shutoff RNase UL41/VHS. Also plays a role in the primary envelopment of virions in the perinuclear space, probably by interacting with two nuclear egress proteins UL31 and UL34. The protein is Tegument protein UL47 of Homo sapiens (Human).